We begin with the raw amino-acid sequence, 361 residues long: Fructose-1,6-bisphosphatase class 1 2 (361 aa).

Mg(2+)-binding residues include E110, D134, L136, and D137. Substrate is bound by residues D137–S140, N231, Y264, and K294. Position 300 (E300) interacts with Mg(2+).

The protein belongs to the FBPase class 1 family. As to quaternary structure, homotetramer. The cofactor is Mg(2+).

The protein resides in the cytoplasm. The enzyme catalyses beta-D-fructose 1,6-bisphosphate + H2O = beta-D-fructose 6-phosphate + phosphate. It participates in carbohydrate biosynthesis; gluconeogenesis. The protein is Fructose-1,6-bisphosphatase class 1 2 of Salinibacter ruber (strain DSM 13855 / M31).